The following is a 340-amino-acid chain: Glucokinase (340 aa).

Position 17–22 (Gly17–Thr22) interacts with ATP.

It belongs to the bacterial glucokinase family.

It localises to the cytoplasm. The enzyme catalyses D-glucose + ATP = D-glucose 6-phosphate + ADP + H(+). The protein is Glucokinase of Agrobacterium fabrum (strain C58 / ATCC 33970) (Agrobacterium tumefaciens (strain C58)).